The chain runs to 526 residues: Amino acid transporter AVT1E (526 aa).

The tract at residues 1-49 (MKQNETFDQEREDLYHTFDEEDEESQTESSVPSTPLSRNRSEDVPVPWP) is disordered. Over residues 8 to 18 (DQEREDLYHTF) the composition is skewed to basic and acidic residues. The next 11 membrane-spanning stretches (helical) occupy residues 140 to 160 (SVLN…PYAV), 165 to 185 (WLGL…GILL), 212 to 232 (ILVS…YIIM), 253 to 273 (LDST…TVWL), 278 to 298 (LLSY…LCLF), 320 to 340 (IPVA…FPNI), 353 to 373 (VLLI…VCGF), 397 to 417 (IAVW…ITPV), 436 to 456 (GVSM…ALTV), 458 to 478 (FFAT…ALIF), and 494 to 514 (FQIG…CCGT).

This sequence belongs to the amino acid/polyamine transporter 2 family. Amino acid/auxin permease (AAAP) (TC 2.A.18.5) subfamily.

The protein localises to the membrane. The sequence is that of Amino acid transporter AVT1E from Arabidopsis thaliana (Mouse-ear cress).